Consider the following 400-residue polypeptide: MLKVEMLSTGDEVLHGQIVDTNAAWLADFFFHQGLPLSRRNTVGDNLDDLVTILRERSQHADVLIVNGGLGPTSDDLSALAAATAKGEGLVLHEAWLKEMERYFHERGRVMAPSNRKQAELPASAEFINNPVGTACGFAVQLNRCLMFFTPGVPSEFKVMVEHEILPRLRERFSLPQPPVCLRLTTFGRSESDLAQSLDSLQLPPGVTMGYRSSMPIIELKLTGPASEEQAMEKLWLDVKRVAGQSVIFEGTEGLPAQISRELQSRQFSLTLSEQFTGGLLALQLSRAGAPLLACEVVPSQEETLAQTAHWITERRANHFAGLALAVSGFENEHLNFALATPDGTFALRVRFSTTRYSQAIRQEVCAMMALNMLRRWLNDQDIASEHGWIEVVESMTLSV.

This sequence belongs to the CinA family.

This is CinA-like protein from Escherichia coli (strain SMS-3-5 / SECEC).